The following is a 332-amino-acid chain: Malate dehydrogenase, cytoplasmic (332 aa).

Residues 16 to 17 (QI), Asp43, and Gly90 contribute to the NAD(+) site. Residue Arg99 coordinates oxaloacetate. NAD(+) is bound by residues Gln113 and Asn132. Residues Asn132, Arg163, His188, and Ser243 each coordinate oxaloacetate. Catalysis depends on His188, which acts as the Proton acceptor.

Belongs to the LDH/MDH superfamily. MDH type 2 family. Homodimer.

The protein localises to the cytoplasm. The enzyme catalyses (S)-malate + NAD(+) = oxaloacetate + NADH + H(+). The protein is Malate dehydrogenase, cytoplasmic (NR1) of Beta vulgaris (Sugar beet).